The sequence spans 256 residues: CD209 antigen-like protein 2 (256 aa).

At 1 to 50 the chain is on the cytoplasmic side; it reads MSDSKEPRAQPLGLLEEEELITSSMNFFPRDFGFRQTRGYKSLAGCLGHA. The short motif at 14–15 is the Endocytosis signal element; that stretch reads LL. The helical; Signal-anchor for type II membrane protein transmembrane segment at 51 to 71 threads the bilayer; the sequence is PLVLPLLFFTLFTGLLVAILV. Residues 72 to 240 lie on the Extracellular side of the membrane; sequence QVSKNPSSQR…KSAASCSRDE (169 aa). 3 cysteine pairs are disulfide-bonded: cysteine 108-cysteine 119, cysteine 136-cysteine 229, and cysteine 208-cysteine 221. The 117-residue stretch at 114 to 230 folds into the C-type lectin domain; it reads FFQGNCYFIS…CSAAKFWICK (117 aa). Ca(2+) contacts are provided by glutamate 199, asparagine 201, isoleucine 203, glutamate 206, asparagine 217, and aspartate 218.

Predominantly expressed in liver and axillary lymph nodes. At very low levels also found in other tissues.

Its subcellular location is the membrane. Functionally, probable pathogen-recognition receptor involved in peripheral immune surveillance in liver. May mediate the endocytosis of pathogens which are subsequently degraded in lysosomal compartments. Probably recognizes in a calcium-dependent manner high mannose N-linked oligosaccharides in a variety of pathogen antigens. Is a receptor for ICAM3, probably by binding to mannose-like carbohydrates. This chain is CD209 antigen-like protein 2 (CD209L2), found in Macaca mulatta (Rhesus macaque).